The sequence spans 313 residues: Potassium channel subfamily K member 6 (313 aa).

The Cytoplasmic portion of the chain corresponds to methionine 1–glycine 4. The chain crosses the membrane as a helical span at residues alanine 5 to valine 25. Asparagine 79 and asparagine 85 each carry an N-linked (GlcNAc...) asparagine glycan. An intramembrane region (pore-forming) is located at residues alanine 90–leucine 115. 4 residues coordinate K(+): threonine 106, valine 107, glycine 108, and tyrosine 109. Residues threonine 106 to tyrosine 111 form a selectivity filter 1 region. Residues alanine 121–serine 141 traverse the membrane as a helical segment. The Cytoplasmic portion of the chain corresponds to alanine 142–histidine 172. Residues leucine 173–alanine 193 form a helical membrane-spanning segment. An intramembrane region (pore-forming) is located at residues tryptophan 199–glycine 223. Residues threonine 214, isoleucine 215, and glycine 216 each coordinate K(+). The interval threonine 214 to aspartate 219 is selectivity filter 2. The helical transmembrane segment at valine 236–phenylalanine 256 threads the bilayer. The Cytoplasmic segment spans residues arginine 257 to arginine 313. Short sequence motifs (lysosomal targeting signal) lie at residues aspartate 282–leucine 290 and tyrosine 308–proline 312.

The protein belongs to the two pore domain potassium channel (TC 1.A.1.8) family. In terms of assembly, homodimer; disulfide-linked. In terms of processing, N-glycosylation is necessary for targeting to lysosomes.

The protein localises to the late endosome membrane. The protein resides in the lysosome membrane. The catalysed reaction is K(+)(in) = K(+)(out). Its function is as follows. K(+) channel that conducts outward rectifying currents at the membranes of the endolysosomal system. Active in lysosomes where it regulates lysosome numbers and size. In macrophages, enables K(+) efflux coupled to ATP-induced NLRP3 inflammasome activation upon bacterial infection. Cooperates with ATP-gated P2RX7 to activate NLRP3 inflammasome, with P2RX7 conducting Ca(2+) and Na(+) influx that sets the membrane potential for K(+) efflux. The sequence is that of Potassium channel subfamily K member 6 from Mus musculus (Mouse).